Here is a 512-residue protein sequence, read N- to C-terminus: Glycerol kinase (512 aa).

Residue Thr14 coordinates ADP. The ATP site is built by Thr14, Thr15, and Ser16. Thr14 serves as a coordination point for sn-glycerol 3-phosphate. An ADP-binding site is contributed by Arg18. Sn-glycerol 3-phosphate-binding residues include Arg83, Glu84, Tyr135, and Asp244. The glycerol site is built by Arg83, Glu84, Tyr135, Asp244, and Gln245. Residues Thr266, Gly309, Gly410, and Asn414 each contribute to the ADP site. Residues Thr266, Gly309, and Gly410 each contribute to the ATP site.

Belongs to the FGGY kinase family.

The enzyme catalyses glycerol + ATP = sn-glycerol 3-phosphate + ADP + H(+). The protein operates within polyol metabolism; glycerol degradation via glycerol kinase pathway; sn-glycerol 3-phosphate from glycerol: step 1/1. With respect to regulation, inhibited by fructose 1,6-bisphosphate (FBP). In terms of biological role, key enzyme in the regulation of glycerol uptake and metabolism. Catalyzes the phosphorylation of glycerol to yield sn-glycerol 3-phosphate. This is Glycerol kinase from Gluconobacter oxydans (strain 621H) (Gluconobacter suboxydans).